The sequence spans 323 residues: tRNA U34 carboxymethyltransferase (323 aa).

Residues Lys91, Trp105, Lys110, Gly130, 152 to 154 (DPT), 181 to 182 (IE), Met196, Tyr200, and Arg315 each bind carboxy-S-adenosyl-L-methionine.

Belongs to the class I-like SAM-binding methyltransferase superfamily. CmoB family. As to quaternary structure, homotetramer.

The catalysed reaction is carboxy-S-adenosyl-L-methionine + 5-hydroxyuridine(34) in tRNA = 5-carboxymethoxyuridine(34) in tRNA + S-adenosyl-L-homocysteine + H(+). In terms of biological role, catalyzes carboxymethyl transfer from carboxy-S-adenosyl-L-methionine (Cx-SAM) to 5-hydroxyuridine (ho5U) to form 5-carboxymethoxyuridine (cmo5U) at position 34 in tRNAs. The protein is tRNA U34 carboxymethyltransferase of Salmonella gallinarum (strain 287/91 / NCTC 13346).